A 33-amino-acid polypeptide reads, in one-letter code: uncharacterized protein (33 aa).

The protein resides in the cytoplasm. Its subcellular location is the nucleus. This is an uncharacterized protein from Schizosaccharomyces pombe (strain 972 / ATCC 24843) (Fission yeast).